The primary structure comprises 161 residues: Ribosome maturation factor RimP (161 aa).

This sequence belongs to the RimP family.

The protein resides in the cytoplasm. In terms of biological role, required for maturation of 30S ribosomal subunits. The protein is Ribosome maturation factor RimP of Rickettsia typhi (strain ATCC VR-144 / Wilmington).